The primary structure comprises 387 residues: MEETTDFLFFNKYSREFSYHFFGKFFFFKEINTKLIFFFERFNLFSFFTFFSIFILSRNLVHTKNFITALFTYTKATLKKQKKNFFIFFRISFFFVVFLFFYLLFSYTLENIPVSKLFFVWGSWGAFLYIFISGFNFFGKKYTYGKYTEALQRFWKRSFSIFWLIEGFVFSAFIFLTFNASSEVVYSYDPQAFFKLHLISLRFFFFKMLALTFLILCFSMVSSLNLRKRFNMFIFNTTSLFVIIIFLIESDQYISIVNYCGFFEWSFNHSDFALDSDFRKSRTVNSYVLLIGIAKYLHILFIVFVWFFNFAKNLENNESRDYIAGTCTQNAIILYLLNWFAIYPYIKYFFRTYYYSTFSWFFFDFKNESAFNFARFLFNFWSSAFLN.

Its subcellular location is the mitochondrion. This is an uncharacterized protein from Paramecium tetraurelia.